A 173-amino-acid polypeptide reads, in one-letter code: Crossover junction endodeoxyribonuclease RuvC (173 aa).

Active-site residues include Asp-8, Glu-67, and Asp-139. Mg(2+) contacts are provided by Asp-8, Glu-67, and Asp-139.

Belongs to the RuvC family. As to quaternary structure, homodimer which binds Holliday junction (HJ) DNA. The HJ becomes 2-fold symmetrical on binding to RuvC with unstacked arms; it has a different conformation from HJ DNA in complex with RuvA. In the full resolvosome a probable DNA-RuvA(4)-RuvB(12)-RuvC(2) complex forms which resolves the HJ. Mg(2+) serves as cofactor.

It localises to the cytoplasm. The catalysed reaction is Endonucleolytic cleavage at a junction such as a reciprocal single-stranded crossover between two homologous DNA duplexes (Holliday junction).. The RuvA-RuvB-RuvC complex processes Holliday junction (HJ) DNA during genetic recombination and DNA repair. Endonuclease that resolves HJ intermediates. Cleaves cruciform DNA by making single-stranded nicks across the HJ at symmetrical positions within the homologous arms, yielding a 5'-phosphate and a 3'-hydroxyl group; requires a central core of homology in the junction. The consensus cleavage sequence is 5'-(A/T)TT(C/G)-3'. Cleavage occurs on the 3'-side of the TT dinucleotide at the point of strand exchange. HJ branch migration catalyzed by RuvA-RuvB allows RuvC to scan DNA until it finds its consensus sequence, where it cleaves and resolves the cruciform DNA. The protein is Crossover junction endodeoxyribonuclease RuvC of Shewanella sp. (strain MR-4).